The chain runs to 131 residues: Superoxide dismutase [Ni] (131 aa).

Positions methionine 1–alanine 14 are excised as a propeptide. Residues histidine 15, cysteine 16, and cysteine 20 each coordinate Ni(2+).

The protein belongs to the nickel superoxide dismutase family. As to quaternary structure, homohexamer. The hexameric protein has a roughly the shape of a hollow sphere with an outer diameter of 60 angstroms and a large interior cavity. Requires Ni(2+) as cofactor.

The protein resides in the cytoplasm. It catalyses the reaction 2 superoxide + 2 H(+) = H2O2 + O2. The protein is Superoxide dismutase [Ni] (sodN) of Streptomyces coelicolor (strain ATCC BAA-471 / A3(2) / M145).